Reading from the N-terminus, the 274-residue chain is Histone H1.1 (274 aa).

Disordered regions lie at residues 1–63 (MSEV…SSHP) and 129–155 (PSAS…PATV). Serine 2 carries the post-translational modification N-acetylserine. Residues 16 to 25 (TAADAPVTDA) show a composition bias toward low complexity. Residues 40 to 49 (NVKEVKEKKT) are compositionally biased toward basic and acidic residues. Positions 61–130 (SHPTYEEMIK…KVKASFKLPS (70 aa)) constitute an H15 domain. Over residues 129–145 (PSASAKASSPKAAAEKS) the composition is skewed to low complexity. Residue lysine 161 forms a Glycyl lysine isopeptide (Lys-Gly) (interchain with G-Cter in ubiquitin) linkage. Disordered regions lie at residues 167-233 (ASKA…PAKK) and 249-274 (KTPV…RVKK). Composition is skewed to low complexity over residues 175-185 (AVKPKTAAAKK) and 221-233 (AAKT…PAKK).

This sequence belongs to the histone H1/H5 family.

Its subcellular location is the nucleus. It is found in the chromosome. Its function is as follows. Histones H1 are necessary for the condensation of nucleosome chains into higher-order structures. The chain is Histone H1.1 from Arabidopsis thaliana (Mouse-ear cress).